A 334-amino-acid polypeptide reads, in one-letter code: Aspartate carbamoyltransferase catalytic subunit (334 aa).

Arginine 71 and threonine 72 together coordinate carbamoyl phosphate. Position 99 (lysine 99) interacts with L-aspartate. The carbamoyl phosphate site is built by arginine 121, histidine 151, and glutamine 154. Residues arginine 184 and arginine 239 each contribute to the L-aspartate site. The carbamoyl phosphate site is built by glycine 280 and proline 281.

This sequence belongs to the aspartate/ornithine carbamoyltransferase superfamily. ATCase family. As to quaternary structure, heterododecamer (2C3:3R2) of six catalytic PyrB chains organized as two trimers (C3), and six regulatory PyrI chains organized as three dimers (R2).

The catalysed reaction is carbamoyl phosphate + L-aspartate = N-carbamoyl-L-aspartate + phosphate + H(+). It functions in the pathway pyrimidine metabolism; UMP biosynthesis via de novo pathway; (S)-dihydroorotate from bicarbonate: step 2/3. In terms of biological role, catalyzes the condensation of carbamoyl phosphate and aspartate to form carbamoyl aspartate and inorganic phosphate, the committed step in the de novo pyrimidine nucleotide biosynthesis pathway. The chain is Aspartate carbamoyltransferase catalytic subunit from Pseudomonas entomophila (strain L48).